The primary structure comprises 362 residues: Heme A synthase (362 aa).

Helical transmembrane passes span 12 to 32, 102 to 122, 128 to 148, 159 to 179, and 198 to 218; these read AVRI…LVGG, VIGA…DLGG, LWII…MVAS, VRLA…VWTL, and AAVL…VAGL. Position 262 (His-262) interacts with heme. 3 consecutive transmembrane segments (helical) span residues 264–281, 289–309, and 312–332; these read MLAY…IDAW, GALA…VTLL, and VPIG…TLAV. His-320 provides a ligand contact to heme.

The protein belongs to the COX15/CtaA family. Type 2 subfamily. As to quaternary structure, interacts with CtaB. It depends on heme b as a cofactor.

The protein localises to the cell membrane. The enzyme catalyses Fe(II)-heme o + 2 A + H2O = Fe(II)-heme a + 2 AH2. Its pathway is porphyrin-containing compound metabolism; heme A biosynthesis; heme A from heme O: step 1/1. In terms of biological role, catalyzes the conversion of heme O to heme A by two successive hydroxylations of the methyl group at C8. The first hydroxylation forms heme I, the second hydroxylation results in an unstable dihydroxymethyl group, which spontaneously dehydrates, resulting in the formyl group of heme A. In Rhodopseudomonas palustris (strain BisB18), this protein is Heme A synthase.